The chain runs to 208 residues: Phosphoheptose isomerase (208 aa).

The 163-residue stretch at M38–P200 folds into the SIS domain. N53–G55 lines the substrate pocket. Residues H62 and E66 each coordinate Zn(2+). Substrate-binding positions include E66, N95–D96, S121–S123, S126, and Q173. Positions 173 and 181 each coordinate Zn(2+).

The protein belongs to the SIS family. GmhA subfamily. Homotetramer. The cofactor is Zn(2+).

It is found in the cytoplasm. It catalyses the reaction 2 D-sedoheptulose 7-phosphate = D-glycero-alpha-D-manno-heptose 7-phosphate + D-glycero-beta-D-manno-heptose 7-phosphate. It functions in the pathway carbohydrate biosynthesis; D-glycero-D-manno-heptose 7-phosphate biosynthesis; D-glycero-alpha-D-manno-heptose 7-phosphate and D-glycero-beta-D-manno-heptose 7-phosphate from sedoheptulose 7-phosphate: step 1/1. Its function is as follows. Catalyzes the isomerization of sedoheptulose 7-phosphate in D-glycero-D-manno-heptose 7-phosphate. This chain is Phosphoheptose isomerase, found in Nitratidesulfovibrio vulgaris (strain DSM 19637 / Miyazaki F) (Desulfovibrio vulgaris).